Consider the following 337-residue polypeptide: DNA-directed RNA polymerase subunit alpha (337 aa).

Residues 1 to 226 are alpha N-terminal domain (alpha-NTD); it reads MLIAQRPTLT…ELFGLARELN (226 aa). The tract at residues 243–337 is alpha C-terminal domain (alpha-CTD); it reads LAADLALEIE…DTSFAEDEQL (95 aa). Residues 315 to 337 form a disordered region; it reads FDPSAVVNDFEDDDTSFAEDEQL. A compositionally biased stretch (acidic residues) spans 323-337; that stretch reads DFEDDDTSFAEDEQL.

The protein belongs to the RNA polymerase alpha chain family. In terms of assembly, homodimer. The RNAP catalytic core consists of 2 alpha, 1 beta, 1 beta' and 1 omega subunit. When a sigma factor is associated with the core the holoenzyme is formed, which can initiate transcription.

The catalysed reaction is RNA(n) + a ribonucleoside 5'-triphosphate = RNA(n+1) + diphosphate. Functionally, DNA-dependent RNA polymerase catalyzes the transcription of DNA into RNA using the four ribonucleoside triphosphates as substrates. The sequence is that of DNA-directed RNA polymerase subunit alpha from Kineococcus radiotolerans (strain ATCC BAA-149 / DSM 14245 / SRS30216).